Consider the following 118-residue polypeptide: Holo-[acyl-carrier-protein] synthase (118 aa).

Mg(2+) contacts are provided by D8 and E57.

The protein belongs to the P-Pant transferase superfamily. AcpS family. It depends on Mg(2+) as a cofactor.

It localises to the cytoplasm. It carries out the reaction apo-[ACP] + CoA = holo-[ACP] + adenosine 3',5'-bisphosphate + H(+). Its function is as follows. Transfers the 4'-phosphopantetheine moiety from coenzyme A to a Ser of acyl-carrier-protein. The polypeptide is Holo-[acyl-carrier-protein] synthase (Pediococcus pentosaceus (strain ATCC 25745 / CCUG 21536 / LMG 10740 / 183-1w)).